The following is a 102-amino-acid chain: Sulfur globule protein CV3 (102 aa).

Residues 1 to 25 (MTMKRLLLVSTLAGASALATLPANA) form the signal peptide.

In terms of assembly, the protein envelope of the sulfur globules is composed of the three different proteins CV1, CV2 and CV3.

Its function is as follows. Structural protein of the sulfur globules, which are intracellular globules that serve for sulfur storage in purple sulfur bacteria. The protein is Sulfur globule protein CV3 (sgpC) of Allochromatium vinosum (strain ATCC 17899 / DSM 180 / NBRC 103801 / NCIMB 10441 / D) (Chromatium vinosum).